We begin with the raw amino-acid sequence, 50 residues long: Omwaprin-a (50 aa).

A WAP domain is found at 3 to 47 (RPKKPGLCPPRPQKPCVKECKNDDSCPGQQKCCNYGCKDECRDPI). Intrachain disulfides connect Cys-10–Cys-35, Cys-18–Cys-39, Cys-22–Cys-34, and Cys-28–Cys-43.

The protein belongs to the venom waprin family. Expressed by the venom gland.

Its subcellular location is the secreted. In terms of biological role, damages membranes of susceptible bacteria. Has antibacterial activity against the Gram-positive bacteria B.megaterium and S.warneri. After a 45-minute treatment with this protein, B.megaterium have no visible pili and are smooth. Has no antibacterial activity against the Gram-positive bacteria B.thuringiensis, S.aureus, S.clavuligerus and B.anthracis, or the Gram-negative bacteria E.coli and A.tumefaciens. Has no hemolytic activity. Does not inhibit the proteinases elastase and cathepsin G. Is not toxic to mice. This chain is Omwaprin-a, found in Oxyuranus microlepidotus (Inland taipan).